Consider the following 178-residue polypeptide: Ribulose bisphosphate carboxylase small subunit, chloroplastic (178 aa).

Residues 1–54 (MASISSSVATVSRTAPAQANMVAPFTGLKSNAAFPTTKKANDFSTLPSNGGRVQ) constitute a chloroplast transit peptide.

It belongs to the RuBisCO small chain family. As to quaternary structure, heterohexadecamer of 8 large and 8 small subunits.

It localises to the plastid. The protein resides in the chloroplast. Its function is as follows. RuBisCO catalyzes two reactions: the carboxylation of D-ribulose 1,5-bisphosphate, the primary event in carbon dioxide fixation, as well as the oxidative fragmentation of the pentose substrate. Both reactions occur simultaneously and in competition at the same active site. Although the small subunit is not catalytic it is essential for maximal activity. The sequence is that of Ribulose bisphosphate carboxylase small subunit, chloroplastic from Helianthus annuus (Common sunflower).